The following is a 56-amino-acid chain: UPF0434 protein CBUD_1597.1 (56 aa).

The protein belongs to the UPF0434 family.

The chain is UPF0434 protein CBUD_1597.1 from Coxiella burnetii (strain Dugway 5J108-111).